The sequence spans 365 residues: Peptide chain release factor 2 (365 aa).

Position 251 is an N5-methylglutamine (Q251).

It belongs to the prokaryotic/mitochondrial release factor family. Post-translationally, methylated by PrmC. Methylation increases the termination efficiency of RF2.

It is found in the cytoplasm. Its function is as follows. Peptide chain release factor 2 directs the termination of translation in response to the peptide chain termination codons UGA and UAA. The chain is Peptide chain release factor 2 from Sulfurimonas denitrificans (strain ATCC 33889 / DSM 1251) (Thiomicrospira denitrificans (strain ATCC 33889 / DSM 1251)).